The primary structure comprises 217 residues: Phosphatidylserine decarboxylase proenzyme (217 aa).

Serine 182 (schiff-base intermediate with substrate; via pyruvic acid) is an active-site residue. A Pyruvic acid (Ser); by autocatalysis modification is found at serine 182.

The protein belongs to the phosphatidylserine decarboxylase family. PSD-A subfamily. Heterodimer of a large membrane-associated beta subunit and a small pyruvoyl-containing alpha subunit. Pyruvate serves as cofactor. Post-translationally, is synthesized initially as an inactive proenzyme. Formation of the active enzyme involves a self-maturation process in which the active site pyruvoyl group is generated from an internal serine residue via an autocatalytic post-translational modification. Two non-identical subunits are generated from the proenzyme in this reaction, and the pyruvate is formed at the N-terminus of the alpha chain, which is derived from the carboxyl end of the proenzyme. The post-translation cleavage follows an unusual pathway, termed non-hydrolytic serinolysis, in which the side chain hydroxyl group of the serine supplies its oxygen atom to form the C-terminus of the beta chain, while the remainder of the serine residue undergoes an oxidative deamination to produce ammonia and the pyruvoyl prosthetic group on the alpha chain.

It is found in the cell membrane. The enzyme catalyses a 1,2-diacyl-sn-glycero-3-phospho-L-serine + H(+) = a 1,2-diacyl-sn-glycero-3-phosphoethanolamine + CO2. Its pathway is phospholipid metabolism; phosphatidylethanolamine biosynthesis; phosphatidylethanolamine from CDP-diacylglycerol: step 2/2. Its function is as follows. Catalyzes the formation of phosphatidylethanolamine (PtdEtn) from phosphatidylserine (PtdSer). The sequence is that of Phosphatidylserine decarboxylase proenzyme from Prosthecochloris aestuarii (strain DSM 271 / SK 413).